The chain runs to 474 residues: Probable periplasmic serine endoprotease DegP-like (474 aa).

Residues 1-25 form the signal peptide; the sequence is MRNLKSVTPLLMAALLWGQSLLAQA. Catalysis depends on charge relay system residues His113, Asp143, and Ser216. Substrate-binding positions include 214–216 and 271–275; these read GNS and LGVVI. PDZ domains follow at residues 260–351 and 357–463; these read LKAD…VRDG and KVTI…LRQG.

This sequence belongs to the peptidase S1C family.

The protein resides in the periplasm. It catalyses the reaction Acts on substrates that are at least partially unfolded. The cleavage site P1 residue is normally between a pair of hydrophobic residues, such as Val-|-Val.. In terms of biological role, might be efficient in the degradation of transiently denatured and unfolded proteins which accumulate in the periplasm following stress conditions. The protein is Probable periplasmic serine endoprotease DegP-like of Ectopseudomonas mendocina (strain ymp) (Pseudomonas mendocina).